A 133-amino-acid polypeptide reads, in one-letter code: Large ribosomal subunit protein uL11 (133 aa).

Belongs to the universal ribosomal protein uL11 family. Part of the ribosomal stalk of the 50S ribosomal subunit. Interacts with L10 and the large rRNA to form the base of the stalk. L10 forms an elongated spine to which 2 L12 dimers bind in a sequential fashion forming a pentameric L10(L12)2(L12)2 complex. In terms of processing, one or more lysine residues are methylated.

Functionally, forms part of the ribosomal stalk which helps the ribosome interact with GTP-bound translation factors. The protein is Large ribosomal subunit protein uL11 of Geobacillus stearothermophilus (Bacillus stearothermophilus).